The chain runs to 103 residues: Co-chaperonin GroES (103 aa).

It belongs to the GroES chaperonin family. As to quaternary structure, heptamer of 7 subunits arranged in a ring. Interacts with the chaperonin GroEL.

The protein localises to the cytoplasm. Together with the chaperonin GroEL, plays an essential role in assisting protein folding. The GroEL-GroES system forms a nano-cage that allows encapsulation of the non-native substrate proteins and provides a physical environment optimized to promote and accelerate protein folding. GroES binds to the apical surface of the GroEL ring, thereby capping the opening of the GroEL channel. The chain is Co-chaperonin GroES from Prochlorococcus marinus (strain MIT 9515).